A 162-amino-acid chain; its full sequence is ATP synthase subunit b 1 (162 aa).

The helical transmembrane segment at 3 to 23 (FLDATFFAFVGLVLFLALVVY) threads the bilayer.

This sequence belongs to the ATPase B chain family. F-type ATPases have 2 components, F(1) - the catalytic core - and F(0) - the membrane proton channel. F(1) has five subunits: alpha(3), beta(3), gamma(1), delta(1), epsilon(1). F(0) has three main subunits: a(1), b(2) and c(10-14). The alpha and beta chains form an alternating ring which encloses part of the gamma chain. F(1) is attached to F(0) by a central stalk formed by the gamma and epsilon chains, while a peripheral stalk is formed by the delta and b chains.

Its subcellular location is the cell inner membrane. Functionally, f(1)F(0) ATP synthase produces ATP from ADP in the presence of a proton or sodium gradient. F-type ATPases consist of two structural domains, F(1) containing the extramembraneous catalytic core and F(0) containing the membrane proton channel, linked together by a central stalk and a peripheral stalk. During catalysis, ATP synthesis in the catalytic domain of F(1) is coupled via a rotary mechanism of the central stalk subunits to proton translocation. In terms of biological role, component of the F(0) channel, it forms part of the peripheral stalk, linking F(1) to F(0). The polypeptide is ATP synthase subunit b 1 (Rhizobium johnstonii (strain DSM 114642 / LMG 32736 / 3841) (Rhizobium leguminosarum bv. viciae)).